A 245-amino-acid polypeptide reads, in one-letter code: Probable phosphatase YcdX (245 aa).

Zn(2+) contacts are provided by H7, H9, H15, H40, E73, H101, H131, D192, and H194.

It belongs to the PHP family. As to quaternary structure, homotrimer. It depends on Zn(2+) as a cofactor.

This Escherichia coli O139:H28 (strain E24377A / ETEC) protein is Probable phosphatase YcdX.